A 266-amino-acid chain; its full sequence is NADP-dependent mannitol dehydrogenase (266 aa).

NADP(+) contacts are provided by asparagine 107 and lysine 140. The active-site Proton donor is the serine 159. NADP(+)-binding residues include tyrosine 174, lysine 178, isoleucine 206, and threonine 208. Tyrosine 174 acts as the Proton acceptor in catalysis. Lysine 178 serves as the catalytic Lowers pKa of active site Tyr.

This sequence belongs to the short-chain dehydrogenases/reductases (SDR) family. As to quaternary structure, homotetramer.

The enzyme catalyses D-mannitol + NADP(+) = D-fructose + NADPH + H(+). Catalyzes the interconversion between D-mannitol and D-fructose. Plays a key role in liamocins biosynthesis by providing the mannitol moity that is linked to 3,5-dihydroxydecanoic acid (provided by the HR-PKS PKS1) via ester bond formation catalyzed by the esterase EST1. This Aureobasidium melanogenum (Aureobasidium pullulans var. melanogenum) protein is NADP-dependent mannitol dehydrogenase.